The following is a 269-amino-acid chain: tRNA pseudouridine synthase A (269 aa).

The active-site Nucleophile is D55. Y111 contacts substrate.

This sequence belongs to the tRNA pseudouridine synthase TruA family.

It catalyses the reaction uridine(38/39/40) in tRNA = pseudouridine(38/39/40) in tRNA. In terms of biological role, formation of pseudouridine at positions 38, 39 and 40 in the anticodon stem and loop of transfer RNAs. This chain is tRNA pseudouridine synthase A, found in Methanosarcina barkeri (strain Fusaro / DSM 804).